Consider the following 682-residue polypeptide: Methionine--tRNA ligase (682 aa).

Residues 15 to 25 carry the 'HIGH' region motif; that stretch reads PYANGAIHLGH. Residues Cys-146, Cys-149, Cys-159, and Cys-162 each coordinate Zn(2+). Positions 331 to 335 match the 'KMSKS' region motif; it reads KMSKS. An ATP-binding site is contributed by Lys-334. Residues 580 to 682 enclose the tRNA-binding domain; the sequence is DFAKLDMRVA…SGVTAGMQVK (103 aa).

This sequence belongs to the class-I aminoacyl-tRNA synthetase family. MetG type 1 subfamily. As to quaternary structure, homodimer. Zn(2+) is required as a cofactor.

The protein resides in the cytoplasm. The catalysed reaction is tRNA(Met) + L-methionine + ATP = L-methionyl-tRNA(Met) + AMP + diphosphate. Functionally, is required not only for elongation of protein synthesis but also for the initiation of all mRNA translation through initiator tRNA(fMet) aminoacylation. The chain is Methionine--tRNA ligase from Haemophilus influenzae (strain PittEE).